The sequence spans 427 residues: Acyltransferase fer5 (427 aa).

The interval 1-24 (MTAATSVQPSPAPRQPGLRATFNP) is disordered. H342 contacts substrate. The active-site Proton acceptor is the E380.

It belongs to the lysine N-acyltransferase mbtK family.

Its pathway is siderophore biosynthesis. In terms of biological role, acyltransferase; part of the gene cluster that mediates the biosynthesis of siderophore ferrichrome A which is contributing to organismal virulence. The first step of ferrichrome A biosynthesis is performed by the HMG-CoA synthase hcs1 which catalyzes the generation of HMG-CoA and CoA using acetoacetyl-CoA and acetyl-CoA as substrates. The enoyl-CoA isomerase/hydratase fer4 then catalyzes the conversion of hcs1-produced HMG-CoA to methylglutaconyl-CoA. The acyltransferase fer5 then fuses the fer4-generated methylglutaconyl-CoA with sid1-generated hydroxyornithine to yield methylglutaconyl hydroxyornithine. Methylglutaconyl hydroxyornithine is then available for use by the NRPS fer3 to generate ferrichrome A. In Mycosarcoma maydis (Corn smut fungus), this protein is Acyltransferase fer5.